The following is a 462-amino-acid chain: Argininosuccinate lyase (462 aa).

This sequence belongs to the lyase 1 family. Argininosuccinate lyase subfamily.

It localises to the cytoplasm. The catalysed reaction is 2-(N(omega)-L-arginino)succinate = fumarate + L-arginine. It participates in amino-acid biosynthesis; L-arginine biosynthesis; L-arginine from L-ornithine and carbamoyl phosphate: step 3/3. This Methylobacterium sp. (strain 4-46) protein is Argininosuccinate lyase.